Reading from the N-terminus, the 402-residue chain is Multidrug resistance protein MdtH (402 aa).

Topologically, residues methionine 1–lysine 12 are cytoplasmic. A helical membrane pass occupies residues tyrosine 13 to isoleucine 33. Over serine 34–glutamate 98 the chain is Periplasmic. Residues proline 99–phenylalanine 116 traverse the membrane as a helical segment. The Cytoplasmic segment spans residues aspartate 117–serine 138. Residues leucine 139–leucine 159 form a helical membrane-spanning segment. Topologically, residues glutamine 160–arginine 164 are periplasmic. Residues leucine 165–leucine 185 form a helical membrane-spanning segment. Over proline 186–tyrosine 213 the chain is Cytoplasmic. A helical transmembrane segment spans residues valine 214–methionine 234. At valine 235 to serine 243 the chain is on the periplasmic side. A helical membrane pass occupies residues alanine 244–alanine 264. The Cytoplasmic segment spans residues arginine 265–arginine 276. A helical transmembrane segment spans residues leucine 277 to leucine 297. Topologically, residues glutamine 298–glutamine 299 are periplasmic. The chain crosses the membrane as a helical span at residues leucine 300–threonine 320. The Cytoplasmic segment spans residues leucine 321–arginine 339. Residues leucine 340 to glycine 360 traverse the membrane as a helical segment. The Periplasmic portion of the chain corresponds to lysine 361–glutamate 367. The helical transmembrane segment at leucine 368–phenylalanine 388 threads the bilayer. Over serine 389–alanine 402 the chain is Cytoplasmic.

Belongs to the major facilitator superfamily. DHA1 family. MdtH (TC 2.A.1.2.21) subfamily.

The protein localises to the cell inner membrane. Its function is as follows. Confers resistance to norfloxacin and enoxacin. This chain is Multidrug resistance protein MdtH, found in Escherichia coli O7:K1 (strain IAI39 / ExPEC).